Consider the following 294-residue polypeptide: Ribosomal protein L11 methyltransferase (294 aa).

Residues Thr145, Gly166, Asp188, and Asn227 each contribute to the S-adenosyl-L-methionine site.

Belongs to the methyltransferase superfamily. PrmA family.

The protein localises to the cytoplasm. It carries out the reaction L-lysyl-[protein] + 3 S-adenosyl-L-methionine = N(6),N(6),N(6)-trimethyl-L-lysyl-[protein] + 3 S-adenosyl-L-homocysteine + 3 H(+). Its function is as follows. Methylates ribosomal protein L11. The polypeptide is Ribosomal protein L11 methyltransferase (Hydrogenovibrio crunogenus (strain DSM 25203 / XCL-2) (Thiomicrospira crunogena)).